Here is a 233-residue protein sequence, read N- to C-terminus: Small ribosomal subunit protein uS3 (233 aa).

One can recognise a KH type-2 domain in the interval 39-107 (VRQFLNKELE…PAQINIAEVR (69 aa)).

It belongs to the universal ribosomal protein uS3 family. In terms of assembly, part of the 30S ribosomal subunit. Forms a tight complex with proteins S10 and S14.

Its function is as follows. Binds the lower part of the 30S subunit head. Binds mRNA in the 70S ribosome, positioning it for translation. The protein is Small ribosomal subunit protein uS3 of Edwardsiella ictaluri (strain 93-146).